Reading from the N-terminus, the 111-residue chain is ATP-dependent Clp protease adapter protein ClpS (111 aa).

Belongs to the ClpS family. In terms of assembly, binds to the N-terminal domain of the chaperone ClpA.

Its function is as follows. Involved in the modulation of the specificity of the ClpAP-mediated ATP-dependent protein degradation. The chain is ATP-dependent Clp protease adapter protein ClpS from Leptospira interrogans serogroup Icterohaemorrhagiae serovar copenhageni (strain Fiocruz L1-130).